The following is a 93-amino-acid chain: MKMAKAAATNDFGFITCLVIFLVLAGISNGMRMTQKVSCIEGRTLWARPPKFFYCSSTLCEDNCINTGAYRGGTCDMEDEVAICRCHRCKKII.

An N-terminal signal peptide occupies residues 1–30; that stretch reads MKMAKAAATNDFGFITCLVIFLVLAGISNG. Intrachain disulfides connect Cys-39–Cys-89, Cys-55–Cys-75, Cys-60–Cys-84, and Cys-64–Cys-86.

It belongs to the DEFL family.

It localises to the secreted. In Arabidopsis thaliana (Mouse-ear cress), this protein is Putative defensin-like protein 190.